The following is a 101-amino-acid chain: NAD(P)H-quinone oxidoreductase subunit 4L, chloroplastic (101 aa).

3 consecutive transmembrane segments (helical) span residues 2–22 (ILEH…YGLI), 32–52 (MCLE…SDFF), and 61–81 (IFCI…LAIV).

Belongs to the complex I subunit 4L family. As to quaternary structure, NDH is composed of at least 16 different subunits, 5 of which are encoded in the nucleus.

Its subcellular location is the plastid. The protein resides in the chloroplast thylakoid membrane. The enzyme catalyses a plastoquinone + NADH + (n+1) H(+)(in) = a plastoquinol + NAD(+) + n H(+)(out). It carries out the reaction a plastoquinone + NADPH + (n+1) H(+)(in) = a plastoquinol + NADP(+) + n H(+)(out). Functionally, NDH shuttles electrons from NAD(P)H:plastoquinone, via FMN and iron-sulfur (Fe-S) centers, to quinones in the photosynthetic chain and possibly in a chloroplast respiratory chain. The immediate electron acceptor for the enzyme in this species is believed to be plastoquinone. Couples the redox reaction to proton translocation, and thus conserves the redox energy in a proton gradient. The polypeptide is NAD(P)H-quinone oxidoreductase subunit 4L, chloroplastic (Olimarabidopsis pumila (Dwarf rocket)).